Consider the following 427-residue polypeptide: Trigger factor (427 aa).

Positions 163-248 constitute a PPIase FKBP-type domain; that stretch reads GDTVVIDFVG…IHEVKTKEVP (86 aa).

This sequence belongs to the FKBP-type PPIase family. Tig subfamily.

The protein resides in the cytoplasm. The enzyme catalyses [protein]-peptidylproline (omega=180) = [protein]-peptidylproline (omega=0). Its function is as follows. Involved in protein export. Acts as a chaperone by maintaining the newly synthesized protein in an open conformation. Functions as a peptidyl-prolyl cis-trans isomerase. The chain is Trigger factor from Streptococcus agalactiae serotype V (strain ATCC BAA-611 / 2603 V/R).